An 86-amino-acid polypeptide reads, in one-letter code: Large ribosomal subunit protein uL23 (86 aa).

It belongs to the universal ribosomal protein uL23 family. As to quaternary structure, part of the 50S ribosomal subunit. Contacts protein L29.

Binds to 23S rRNA. One of the proteins that surrounds the polypeptide exit tunnel on the outside of the ribosome. The sequence is that of Large ribosomal subunit protein uL23 from Thermococcus onnurineus (strain NA1).